The sequence spans 903 residues: Protein translocase subunit SecA (903 aa).

ATP is bound by residues Q87, G105 to T109, and D512. Zn(2+)-binding residues include C887, C889, C898, and H899.

It belongs to the SecA family. In terms of assembly, monomer and homodimer. Part of the essential Sec protein translocation apparatus which comprises SecA, SecYEG and auxiliary proteins SecDF-YajC and YidC. Requires Zn(2+) as cofactor.

Its subcellular location is the cell inner membrane. The protein localises to the cytoplasm. It catalyses the reaction ATP + H2O + cellular proteinSide 1 = ADP + phosphate + cellular proteinSide 2.. Functionally, part of the Sec protein translocase complex. Interacts with the SecYEG preprotein conducting channel. Has a central role in coupling the hydrolysis of ATP to the transfer of proteins into and across the cell membrane, serving both as a receptor for the preprotein-SecB complex and as an ATP-driven molecular motor driving the stepwise translocation of polypeptide chains across the membrane. This chain is Protein translocase subunit SecA, found in Photorhabdus laumondii subsp. laumondii (strain DSM 15139 / CIP 105565 / TT01) (Photorhabdus luminescens subsp. laumondii).